Consider the following 194-residue polypeptide: Adenylate kinase (194 aa).

Residue 10–15 coordinates ATP; sequence GAGKGT. The segment at 30-59 is NMP; the sequence is STGDMLRAAVAQQSEIGKRAKAVMDAGQLV. Residues threonine 31, arginine 36, 57-59, 85-88, and glutamine 92 contribute to the AMP site; these read QLV and GYPR. The LID stretch occupies residues 126–142; that stretch reads SRVAETIAKGAQVRSDD. An ATP-binding site is contributed by arginine 127. Residues arginine 139 and arginine 150 each contribute to the AMP site. Residue alanine 178 participates in ATP binding.

This sequence belongs to the adenylate kinase family. As to quaternary structure, monomer.

The protein resides in the cytoplasm. The catalysed reaction is AMP + ATP = 2 ADP. It functions in the pathway purine metabolism; AMP biosynthesis via salvage pathway; AMP from ADP: step 1/1. In terms of biological role, catalyzes the reversible transfer of the terminal phosphate group between ATP and AMP. Plays an important role in cellular energy homeostasis and in adenine nucleotide metabolism. The protein is Adenylate kinase of Brucella melitensis biotype 1 (strain ATCC 23456 / CCUG 17765 / NCTC 10094 / 16M).